The sequence spans 203 residues: LexA repressor (203 aa).

A DNA-binding region (H-T-H motif) is located at residues 28–48; the sequence is RAEIASQLGFRSPNAAEEHLK. Residues Ser-120 and Lys-157 each act as for autocatalytic cleavage activity in the active site.

Belongs to the peptidase S24 family. As to quaternary structure, homodimer.

The catalysed reaction is Hydrolysis of Ala-|-Gly bond in repressor LexA.. Represses a number of genes involved in the response to DNA damage (SOS response), including recA and lexA. Binds to the 16 bp palindromic sequence 5'-CTGTATATATATACAG-3'. In the presence of single-stranded DNA, RecA interacts with LexA causing an autocatalytic cleavage which disrupts the DNA-binding part of LexA, leading to derepression of the SOS regulon and eventually DNA repair. The chain is LexA repressor from Proteus mirabilis (strain HI4320).